A 282-amino-acid polypeptide reads, in one-letter code: Ermin (282 aa).

Composition is skewed to polar residues over residues 1 to 12 (MTDTPVTLSGSE) and 21 to 30 (NGQQPSSQTR). Residues 1 to 71 (MTDTPVTLSG…NSKGNVLPRG (71 aa)) are disordered. 5 positions are modified to phosphoserine: S72, S212, S224, S228, and S231. Residues 212–224 (SPLKEESLAREDS) are compositionally biased toward basic and acidic residues. Residues 212-246 (SPLKEESLAREDSPLSSPSSQPGTPDEQLVLGKKG) are disordered. Residues 225 to 234 (PLSSPSSQPG) show a composition bias toward polar residues. Position 235 is a phosphothreonine (T235). The interval 263–282 (KIRKGNTKQRIDEFESMMHL) is binds actin.

Binds actin. Expressed specifically by the oligodendrocytes. Highest expression seen in the spinal cord followed by brainstem, cerebellum, thalamus, and hypothalamus. In the myelin sheath, found mainly in the abaxon and the lateral few terminal loops. Its apposition to the myelinated axon, through the latter, defines an axonal subregion, termed juxtanode, at the Ranvier node-paranode junction.

Its subcellular location is the cytoplasm. It is found in the cytoskeleton. Plays a role in cytoskeletal rearrangements during the late wrapping and/or compaction phases of myelinogenesis as well as in maintenance and stability of myelin sheath in the adult. May play an important role in late-stage oligodendroglia maturation, myelin/Ranvier node formation during CNS development, and in the maintenance and plasticity of related structures in the mature CNS. In Rattus norvegicus (Rat), this protein is Ermin (Ermn).